We begin with the raw amino-acid sequence, 215 residues long: Small ribosomal subunit protein uS2 (215 aa).

Belongs to the universal ribosomal protein uS2 family.

This is Small ribosomal subunit protein uS2 from Caldivirga maquilingensis (strain ATCC 700844 / DSM 13496 / JCM 10307 / IC-167).